Here is an 805-residue protein sequence, read N- to C-terminus: Arginine/serine-rich protein PNISR (805 aa).

Over residues 74 to 88 (PNNHGNFQGDSNFNR) the composition is skewed to polar residues. 2 disordered regions span residues 74-331 (PNNH…EEKE) and 382-805 (LTGL…SRSR). Pro residues-rich tracts occupy residues 100–115 (PPHP…PTPG) and 183–195 (YWQP…PAPP). Over residues 197–210 (NRRERPSSFRDRQR) the composition is skewed to basic and acidic residues. Phosphoserine occurs at positions 204 and 211. K218 is covalently cross-linked (Glycyl lysine isopeptide (Lys-Gly) (interchain with G-Cter in SUMO2)). A coiled-coil region spans residues 237-276 (REGLEKMEREKQKKLEKERMEQQRSQLSKKEKKATEDAEG). The span at 238–258 (EGLEKMEREKQKKLEKERMEQ) shows a compositional bias: basic and acidic residues. S290, S304, S313, and S321 each carry phosphoserine. Acidic residues predominate over residues 290-299 (SDEEEEDTEN). A compositionally biased stretch (gly residues) spans 384 to 393 (GLGGLGGYGS). Basic and acidic residues predominate over residues 421–463 (QKQEAFWRKEKEQQLLHDKQMEEEKQQTERVTKEMNEFIHKEQ). The stretch at 429–461 (KEKEQQLLHDKQMEEEKQQTERVTKEMNEFIHK) forms a coiled coil. S465 and S467 each carry phosphoserine. Composition is skewed to basic and acidic residues over residues 470–486 (EARE…KRTP) and 494–506 (EPKK…EKQG). A Phosphothreonine modification is found at T485. A Glycyl lysine isopeptide (Lys-Gly) (interchain with G-Cter in SUMO2) cross-link involves residue K496. The segment covering 508 to 550 (SRSGSSSSGSSSSNSRTSSTSSTVSSSSYSSSSGSSRTSSRSS) has biased composition (low complexity). 3 stretches are compositionally biased toward basic residues: residues 551–579 (SPKR…YSRR), 587–598 (ARVKIRDRRRSN), and 607–639 (RRNR…SRDR). Basic and acidic residues predominate over residues 659 to 721 (EAKEQERKKE…KRKRESERTF (63 aa)). A coiled-coil region spans residues 673–703 (IDKDRKKKDKEREREQDKRKEKQKREEKDFK). K703 participates in a covalent cross-link: Glycyl lysine isopeptide (Lys-Gly) (interchain with G-Cter in SUMO2). S726 bears the Phosphoserine mark. Residues 732 to 753 (IRHDSRQDSKKSTTKDSKKHSG) are compositionally biased toward basic and acidic residues. Residues 754-767 (SDSSGRSSSESPGS) are compositionally biased toward low complexity. Composition is skewed to basic residues over residues 771–781 (KKAKKPKHSRS) and 789–805 (RSGK…SRSR).

Belongs to the splicing factor SR family. Interacts with PNN. Expressed in heart, skeletal muscle, thymus, spleen, kidney, liver, placenta and leukocytes.

The protein localises to the nucleus speckle. The polypeptide is Arginine/serine-rich protein PNISR (PNISR) (Homo sapiens (Human)).